Here is a 431-residue protein sequence, read N- to C-terminus: Glutamate-1-semialdehyde 2,1-aminomutase (431 aa).

At Lys265 the chain carries N6-(pyridoxal phosphate)lysine.

The protein belongs to the class-III pyridoxal-phosphate-dependent aminotransferase family. HemL subfamily. As to quaternary structure, homodimer. It depends on pyridoxal 5'-phosphate as a cofactor.

It is found in the cytoplasm. It catalyses the reaction (S)-4-amino-5-oxopentanoate = 5-aminolevulinate. It participates in porphyrin-containing compound metabolism; protoporphyrin-IX biosynthesis; 5-aminolevulinate from L-glutamyl-tRNA(Glu): step 2/2. The protein is Glutamate-1-semialdehyde 2,1-aminomutase of Pseudoalteromonas atlantica (strain T6c / ATCC BAA-1087).